Consider the following 168-residue polypeptide: G/U mismatch-specific DNA glycosylase (168 aa).

It belongs to the uracil-DNA glycosylase (UDG) superfamily. TDG/mug family. In terms of assembly, binds DNA as a monomer.

It localises to the cytoplasm. The enzyme catalyses Specifically hydrolyzes mismatched double-stranded DNA and polynucleotides, releasing free uracil.. Functionally, excises ethenocytosine and uracil, which can arise by alkylation or deamination of cytosine, respectively, from the corresponding mispairs with guanine in ds-DNA. It is capable of hydrolyzing the carbon-nitrogen bond between the sugar-phosphate backbone of the DNA and the mispaired base. The complementary strand guanine functions in substrate recognition. Required for DNA damage lesion repair in stationary-phase cells. The polypeptide is G/U mismatch-specific DNA glycosylase (Salmonella agona (strain SL483)).